The primary structure comprises 1930 residues: Transport and Golgi organization protein 1 homolog (1930 aa).

The signal sequence occupies residues 1 to 24 (MAAAPGLLFWLFVLGALWWVPGQS). The Lumenal portion of the chain corresponds to 25–1171 (DLSHGRRFSD…EPAAVPPLES (1147 aa)). One can recognise an SH3 domain in the interval 45–107 (MLMYRGKALE…PKDLIKVLHK (63 aa)). Disordered stretches follow at residues 144–263 (LELE…REKT), 317–496 (EEEE…AAEK), 547–737 (LGSS…MNSQ), 754–891 (TKQP…TPEI), and 1018–1149 (TAPL…PVGA). The span at 152–189 (EESKKAEEVSQHREKSPEESRGRELDPVPEPEAFRADS) shows a compositional bias: basic and acidic residues. The segment covering 197 to 211 (SESTEGLQGQPSAQE) has biased composition (polar residues). Ser229 bears the Phosphoserine mark. Over residues 247–256 (ESRTGNSSPA) the composition is skewed to polar residues. Over residues 317–330 (EEEEEVEEDADSSD) the composition is skewed to acidic residues. Positions 338 to 368 (SDKDEKVPGKPMIEKYLTDKDPNLSEEDKVE) are enriched in basic and acidic residues. Asn360 carries N-linked (GlcNAc...) asparagine glycosylation. Over residues 420–430 (DSEDEGDDLFV) the composition is skewed to acidic residues. 2 stretches are compositionally biased toward basic and acidic residues: residues 431–442 (EEPKTNDVKDSE) and 451–461 (GEEKDIQESRK). Residue Asn631 is glycosylated (N-linked (GlcNAc...) asparagine). Positions 661 to 677 (EDGTDAEQARAIRRPQE) are enriched in basic and acidic residues. Residues 692-701 (DEEEEEEEGD) are compositionally biased toward acidic residues. Residues 715 to 726 (VSAQQSRENSPS) are compositionally biased toward polar residues. Residues 791–800 (EESHLADMRA) are compositionally biased toward basic and acidic residues. A Phosphoserine modification is found at Ser856. The segment covering 1030–1039 (GWARPGEERQ) has biased composition (basic and acidic residues). Polar residues-rich tracts occupy residues 1040 to 1054 (PPQQ…TGDL) and 1115 to 1127 (QPVT…SEVS). Over residues 1128 to 1137 (QKPDTKKDID) the composition is skewed to basic and acidic residues. An intramembrane segment occupies 1172–1192 (AFGSLYAFILYLSKMLLATLP). The Lumenal segment spans residues 1193–1202 (DNVQPGPDFY). A helical transmembrane segment spans residues 1203–1223 (GLPWQPVIITAVLGIVSFAIF). Residues 1224-1930 (SWRTILVVKS…DRSQASKPTP (707 aa)) are Cytoplasmic-facing. 2 coiled-coil regions span residues 1236 to 1329 (YQVT…KNQD) and 1359 to 1422 (LNEA…EIAL). Residues 1238 to 1677 (VTEKQISEKL…VIVKPMPGRP (440 aa)) are mediates interaction with MIA2. The tract at residues 1447-1472 (ESEDPDKGGNESDDLANGETGGDRSE) is disordered. Phosphoserine is present on Ser1458. Residues 1514 to 1662 (NLEDQIKKLE…LLEMTQKMAM (149 aa)) are a coiled coil. Disordered regions lie at residues 1669 to 1796 (IVKP…VPLM), 1801 to 1820 (PPPI…FGPR), and 1840 to 1930 (APGV…KPTP). A compositionally biased stretch (polar residues) spans 1677–1694 (PNTQNPPRRGLLSQNGSF). A phosphoserine mark is found at Ser1693 and Ser1705. A compositionally biased stretch (pro residues) spans 1706-1715 (PPLPAEPPGR). The span at 1722 to 1738 (SRRDTPRSEFGSLDRHL) shows a compositional bias: basic and acidic residues. Residues Ser1733, Ser1754, Ser1766, and Ser1770 each carry the phosphoserine modification. Residues 1760-1773 (PVVNSSSRSSSPAK) are compositionally biased toward low complexity. Residues 1776–1930 (DEGKVNMAPK…DRSQASKPTP (155 aa)) form a proline-rich domain (PRD); mediates interaction with the COPII coat subunits SEC23A and SEC23B region. Positions 1801–1811 (PPPIRYGPPPQ) are enriched in pro residues. Position 1805 is an asymmetric dimethylarginine (Arg1805). Residues 1809–1869 (PPQLCGGPFG…GHTPFRPPGS (61 aa)) are SEC16A-interacting region (SIR); required for its localization to endoplasmic reticulum exit sites and for its interaction with SEC16A. Residues 1846–1858 (GKRDLPLDPREFL) are compositionally biased toward basic and acidic residues. The span at 1881-1898 (RLPPPTHGPQEYPPPPPA) shows a compositional bias: pro residues. Ser1915 is modified (phosphoserine). Positions 1915–1930 (SPSSVQDRSQASKPTP) are enriched in polar residues.

The protein belongs to the MIA/OTOR family. Tango1 subfamily. Interacts with MIA2. Interacts (via SH3 domain) with COL7A1. Interacts with the COPII coat subunits SEC23A, SEC23B and maybe SEC24C. May interact with APOB and MIA2. Interacts with SEC16A.

Its subcellular location is the endoplasmic reticulum membrane. Functionally, plays a role in the transport of cargos that are too large to fit into COPII-coated vesicles and require specific mechanisms to be incorporated into membrane-bound carriers and exported from the endoplasmic reticulum. This protein is required for collagen VII (COL7A1) secretion by loading COL7A1 into transport carriers. It may participate in cargo loading of COL7A1 at endoplasmic reticulum exit sites by binding to COPII coat subunits Sec23/24 and guiding SH3-bound COL7A1 into a growing carrier. Does not play a role in global protein secretion and is apparently specific to COL7A1 cargo loading. However, it may participate in secretion of other proteins in cells that do not secrete COL7A1. It is also specifically required for the secretion of lipoproteins by participating in their export from the endoplasmic reticulum. Required for correct assembly of COPII coat components at endoplasmic reticulum exit sites (ERES) and for the localization of SEC16A and membrane-bound ER-resident complexes consisting of MIA2 and PREB/SEC12 to ERES. This Mus musculus (Mouse) protein is Transport and Golgi organization protein 1 homolog.